The sequence spans 419 residues: CinA-like protein (419 aa).

This sequence belongs to the CinA family.

This chain is CinA-like protein, found in Acaryochloris marina (strain MBIC 11017).